The primary structure comprises 602 residues: Probable pectinesterase/pectinesterase inhibitor 64 (602 aa).

A helical transmembrane segment spans residues 36–56 (ILIIIAASCILLLLISLLIYA). The disordered stretch occupies residues 62-91 (SRNHHNPSHQTPTSDDHPPPETPPSPPPIA). Residues 81-90 (PETPPSPPPI) show a composition bias toward pro residues. The interval 87–237 (PPPIAQIRLA…VNLTGNALSM (151 aa)) is pectinesterase inhibitor 64. Residues Asn-98, Asn-156, Asn-212, Asn-229, and Asn-315 are each glycosylated (N-linked (GlcNAc...) asparagine). Residues 288–595 (DVTVCKNGGK…YSVANFIQAD (308 aa)) are pectinesterase 64. Positions 367 and 397 each coordinate substrate. Asp-420 acts as the Proton donor; for pectinesterase activity in catalysis. A disulfide bond links Cys-434 and Cys-454. The active-site Nucleophile; for pectinesterase activity is Asp-441. N-linked (GlcNAc...) asparagine glycosylation is found at Asn-492 and Asn-496. Substrate is bound by residues Arg-518 and Trp-520.

In the N-terminal section; belongs to the PMEI family. It in the C-terminal section; belongs to the pectinesterase family. In terms of tissue distribution, expressed in siliques.

It is found in the membrane. The catalysed reaction is [(1-&gt;4)-alpha-D-galacturonosyl methyl ester](n) + n H2O = [(1-&gt;4)-alpha-D-galacturonosyl](n) + n methanol + n H(+). It participates in glycan metabolism; pectin degradation; 2-dehydro-3-deoxy-D-gluconate from pectin: step 1/5. In terms of biological role, acts in the modification of cell walls via demethylesterification of cell wall pectin. The protein is Probable pectinesterase/pectinesterase inhibitor 64 (PME64) of Arabidopsis thaliana (Mouse-ear cress).